Reading from the N-terminus, the 245-residue chain is Ubiquinone/menaquinone biosynthesis C-methyltransferase UbiE (245 aa).

S-adenosyl-L-methionine-binding positions include T71, D92, and 118–119 (DA).

The protein belongs to the class I-like SAM-binding methyltransferase superfamily. MenG/UbiE family.

It carries out the reaction a 2-demethylmenaquinol + S-adenosyl-L-methionine = a menaquinol + S-adenosyl-L-homocysteine + H(+). The enzyme catalyses a 2-methoxy-6-(all-trans-polyprenyl)benzene-1,4-diol + S-adenosyl-L-methionine = a 5-methoxy-2-methyl-3-(all-trans-polyprenyl)benzene-1,4-diol + S-adenosyl-L-homocysteine + H(+). The protein operates within quinol/quinone metabolism; menaquinone biosynthesis; menaquinol from 1,4-dihydroxy-2-naphthoate: step 2/2. It participates in cofactor biosynthesis; ubiquinone biosynthesis. Functionally, methyltransferase required for the conversion of demethylmenaquinol (DMKH2) to menaquinol (MKH2) and the conversion of 2-polyprenyl-6-methoxy-1,4-benzoquinol (DDMQH2) to 2-polyprenyl-3-methyl-6-methoxy-1,4-benzoquinol (DMQH2). This Neisseria meningitidis serogroup A / serotype 4A (strain DSM 15465 / Z2491) protein is Ubiquinone/menaquinone biosynthesis C-methyltransferase UbiE.